Consider the following 951-residue polypeptide: MDKTYNPQDIEQSLYQGWEEKGYFKPSGQGVPYSIMIPPPNVTGSLHMGHAFQDTIMDTLTRFKRMQGNNTLWQVGTDHAGIATQMLVERKLHAEEGKTRHDLGREDFINKIWEWKKESGGTITKQLRRLGASVDWDRERFTMDDGLSEAVKEVFVRLHKENLIYRGKRLVNWDPKLHTAISDLEVENKDKQGHMWNLRYPLADGVKTQDGKDYIVVATTRPETMLGDSGVAVNPDDERYIDLIGKEILLPIVNRRIKIVADEHADKDKGTGCVKITPAHDFNDNEVGKRHKMPMINIFDKDAAILTQGETYSFDGKELEFDAPIPERLHGLDRFAARKAIVAEFEELGLLEKIEDHGLTVPYGDRSGVVIEPLLTDQWYVRVAPLAEPAKEAVKNGDIQFVPKQYENMYFSWMNDVQDWCISRQLWWGHRIPAWYDSEGNVFVGRDEAEVRRENNIADSVTLSQDEDVLDTWFSSALWTFSTQGWPANTDDLKTFHPSDVLVTGFDIIFFWVARMIMMTLHFIKDENGKPQVPFKTVYVTGLIRDDNGDKMSKSKGNVLDPLDMIDGIELEELVQKRTGNMMQPKLAAKIEKDTRKVFAGGIEAHGTDALRFTLAAMASTGRDINWDMNRLEGYRNFCNKLWNASRYVLMNTEEQDCGFATDAQKELSLADRWILGQFESTVKSYTEHLDNYRFDLAANTLYEFTWHQFCDWYLELTKPVLFKGNEAQQRGTRNTLITVLESLLRLMHPMMPYITETIWQRVAPLAGLETENTSIMVQAFPVYNAASVDAKAMDDLEWVKQFILAIRNIRGEMDISPSKPLSVLLANASSDDVRRIEENNSFLASLAKIEEFTMLENKDDAPACAASYVGNLEIMIPMAGLIDVEAELSRINKQLEKAEKGLAQVQNKLANEKFVNNAPEAVLAKENAKLAEFSDAKTKLLEQKAKIESL.

Residues 40–50 (PNVTGSLHMGH) carry the 'HIGH' region motif. A 'KMSKS' region motif is present at residues 551–555 (KMSKS). Residue K554 coordinates ATP. Residues 879-950 (MAGLIDVEAE…LLEQKAKIES (72 aa)) are a coiled coil.

This sequence belongs to the class-I aminoacyl-tRNA synthetase family. ValS type 1 subfamily. Monomer.

It is found in the cytoplasm. The catalysed reaction is tRNA(Val) + L-valine + ATP = L-valyl-tRNA(Val) + AMP + diphosphate. Functionally, catalyzes the attachment of valine to tRNA(Val). As ValRS can inadvertently accommodate and process structurally similar amino acids such as threonine, to avoid such errors, it has a 'posttransfer' editing activity that hydrolyzes mischarged Thr-tRNA(Val) in a tRNA-dependent manner. The sequence is that of Valine--tRNA ligase from Pseudoalteromonas translucida (strain TAC 125).